Reading from the N-terminus, the 144-residue chain is Ribonuclease H (144 aa).

The 141-residue stretch at 1–141 (MKKVEIFTDG…ADRLASEAAD (141 aa)) folds into the RNase H type-1 domain. The Mg(2+) site is built by Asp-9, Glu-47, Asp-69, and Asp-133.

It belongs to the RNase H family. Monomer. Mg(2+) serves as cofactor.

It is found in the cytoplasm. The enzyme catalyses Endonucleolytic cleavage to 5'-phosphomonoester.. Its function is as follows. Endonuclease that specifically degrades the RNA of RNA-DNA hybrids. The chain is Ribonuclease H from Erythrobacter litoralis (strain HTCC2594).